We begin with the raw amino-acid sequence, 561 residues long: Arginine--tRNA ligase (561 aa).

The short motif at 129–139 (ANPTGPLHIGH) is the 'HIGH' region element.

This sequence belongs to the class-I aminoacyl-tRNA synthetase family. Monomer.

Its subcellular location is the cytoplasm. It carries out the reaction tRNA(Arg) + L-arginine + ATP = L-arginyl-tRNA(Arg) + AMP + diphosphate. This is Arginine--tRNA ligase from Geotalea uraniireducens (strain Rf4) (Geobacter uraniireducens).